The chain runs to 273 residues: Ethanolamine ammonia-lyase small subunit (273 aa).

The adenosylcob(III)alamin site is built by valine 164, glutamate 185, and cysteine 214.

Belongs to the EutC family. In terms of assembly, the basic unit is a heterodimer which dimerizes to form tetramers. The heterotetramers trimerize; 6 large subunits form a core ring with 6 small subunits projecting outwards. Requires adenosylcob(III)alamin as cofactor.

The protein localises to the bacterial microcompartment. The catalysed reaction is ethanolamine = acetaldehyde + NH4(+). The protein operates within amine and polyamine degradation; ethanolamine degradation. Functionally, catalyzes the deamination of various vicinal amino-alcohols to oxo compounds. Allows this organism to utilize ethanolamine as the sole source of nitrogen and carbon in the presence of external vitamin B12. The protein is Ethanolamine ammonia-lyase small subunit of Pseudomonas aeruginosa (strain UCBPP-PA14).